The following is an 885-amino-acid chain: DNA mismatch repair protein MutS (885 aa).

626 to 633 contributes to the ATP binding site; it reads GPNMGGKS.

Belongs to the DNA mismatch repair MutS family.

Functionally, this protein is involved in the repair of mismatches in DNA. It is possible that it carries out the mismatch recognition step. This protein has a weak ATPase activity. This chain is DNA mismatch repair protein MutS, found in Burkholderia cenocepacia (strain HI2424).